A 229-amino-acid chain; its full sequence is Somatolactin (229 aa).

The signal sequence occupies residues 1-24 (MHLVSVIQRGVWAVLLWPNLLASS). 3 disulfide bridges follow: Cys29–Cys39, Cys87–Cys203, and Cys220–Cys228. 2 N-linked (GlcNAc...) asparagine glycosylation sites follow: Asn143 and Asn175.

Belongs to the somatotropin/prolactin family.

The protein localises to the secreted. This chain is Somatolactin, found in Cyclopterus lumpus (Lumpsucker).